The chain runs to 311 residues: tRNA-cytidine(32) 2-sulfurtransferase (311 aa).

The segment at 18–38 is disordered; sequence KVGADHGPSEENGSSHPLFDN. The short motif at 77–82 is the PP-loop motif element; sequence SGGKDS. 3 residues coordinate [4Fe-4S] cluster: cysteine 152, cysteine 155, and cysteine 243.

The protein belongs to the TtcA family. Homodimer. Mg(2+) serves as cofactor. Requires [4Fe-4S] cluster as cofactor.

It is found in the cytoplasm. It carries out the reaction cytidine(32) in tRNA + S-sulfanyl-L-cysteinyl-[cysteine desulfurase] + AH2 + ATP = 2-thiocytidine(32) in tRNA + L-cysteinyl-[cysteine desulfurase] + A + AMP + diphosphate + H(+). It functions in the pathway tRNA modification. Its function is as follows. Catalyzes the ATP-dependent 2-thiolation of cytidine in position 32 of tRNA, to form 2-thiocytidine (s(2)C32). The sulfur atoms are provided by the cysteine/cysteine desulfurase (IscS) system. The chain is tRNA-cytidine(32) 2-sulfurtransferase from Agrobacterium fabrum (strain C58 / ATCC 33970) (Agrobacterium tumefaciens (strain C58)).